We begin with the raw amino-acid sequence, 492 residues long: Ketol-acid reductoisomerase (NADP(+)) (492 aa).

Residues 17 to 208 (LGQCRLMKKN…GSNKAGVLES (192 aa)) form the KARI N-terminal Rossmann domain. NADP(+) contacts are provided by residues 45 to 48 (CGSQ), Arg-68, Ser-76, and Ser-78. The active site involves His-132. Residue Gly-158 participates in NADP(+) binding. 2 consecutive KARI C-terminal knotted domains span residues 209–344 (SFVA…KAPV) and 345–487 (YCET…MKDM). Mg(2+) contacts are provided by Asp-217, Glu-221, Glu-389, and Glu-393. Position 414 (Ser-414) interacts with substrate.

Belongs to the ketol-acid reductoisomerase family. The cofactor is Mg(2+).

It carries out the reaction (2R)-2,3-dihydroxy-3-methylbutanoate + NADP(+) = (2S)-2-acetolactate + NADPH + H(+). It catalyses the reaction (2R,3R)-2,3-dihydroxy-3-methylpentanoate + NADP(+) = (S)-2-ethyl-2-hydroxy-3-oxobutanoate + NADPH + H(+). Its pathway is amino-acid biosynthesis; L-isoleucine biosynthesis; L-isoleucine from 2-oxobutanoate: step 2/4. The protein operates within amino-acid biosynthesis; L-valine biosynthesis; L-valine from pyruvate: step 2/4. Its function is as follows. Involved in the biosynthesis of branched-chain amino acids (BCAA). Catalyzes an alkyl-migration followed by a ketol-acid reduction of (S)-2-acetolactate (S2AL) to yield (R)-2,3-dihydroxy-isovalerate. In the isomerase reaction, S2AL is rearranged via a Mg-dependent methyl migration to produce 3-hydroxy-3-methyl-2-ketobutyrate (HMKB). In the reductase reaction, this 2-ketoacid undergoes a metal-dependent reduction by NADPH to yield (R)-2,3-dihydroxy-isovalerate. This chain is Ketol-acid reductoisomerase (NADP(+)), found in Blochmanniella floridana.